Consider the following 184-residue polypeptide: Shikimate kinase (184 aa).

ATP is bound at residue 20 to 25 (GVGKSR). S24 contacts Mg(2+). The substrate site is built by D42, R66, and G88. Position 127 (R127) interacts with ATP. Residue R146 participates in substrate binding. Position 162 (R162) interacts with ATP.

This sequence belongs to the shikimate kinase family. Monomer. Mg(2+) is required as a cofactor.

It localises to the cytoplasm. It carries out the reaction shikimate + ATP = 3-phosphoshikimate + ADP + H(+). Its pathway is metabolic intermediate biosynthesis; chorismate biosynthesis; chorismate from D-erythrose 4-phosphate and phosphoenolpyruvate: step 5/7. Catalyzes the specific phosphorylation of the 3-hydroxyl group of shikimic acid using ATP as a cosubstrate. The protein is Shikimate kinase of Thermus thermophilus (strain ATCC 27634 / DSM 579 / HB8).